Consider the following 431-residue polypeptide: Glycerol-3-phosphate dehydrogenase [NAD(P)+] (431 aa).

4 residues coordinate NADPH: S79, F80, R100, and K173. Sn-glycerol 3-phosphate-binding residues include K173 and G201. NADPH is bound at residue A205. Positions 256, 309, 319, 320, and 321 each coordinate sn-glycerol 3-phosphate. K256 (proton acceptor) is an active-site residue. Position 320 (R320) interacts with NADPH. An NADPH-binding site is contributed by E346.

It belongs to the NAD-dependent glycerol-3-phosphate dehydrogenase family.

The protein resides in the cytoplasm. It carries out the reaction sn-glycerol 3-phosphate + NAD(+) = dihydroxyacetone phosphate + NADH + H(+). It catalyses the reaction sn-glycerol 3-phosphate + NADP(+) = dihydroxyacetone phosphate + NADPH + H(+). It participates in membrane lipid metabolism; glycerophospholipid metabolism. Functionally, catalyzes the reduction of the glycolytic intermediate dihydroxyacetone phosphate (DHAP) to sn-glycerol 3-phosphate (G3P), the key precursor for phospholipid synthesis. The sequence is that of Glycerol-3-phosphate dehydrogenase [NAD(P)+] from Psychrobacter cryohalolentis (strain ATCC BAA-1226 / DSM 17306 / VKM B-2378 / K5).